Here is a 644-residue protein sequence, read N- to C-terminus: Sodium/hydrogen exchanger 9 (644 aa).

Residues 1 to 20 lie on the Lumenal side of the membrane; it reads MAGQLRLTSGKDEDHFQHQG. Residues 21–41 traverse the membrane as a helical segment; that stretch reads AVELLAFNFLLILTILTIWLF. Topologically, residues 42-45 are cytoplasmic; that stretch reads KNHR. The helical transmembrane segment at 46-66 threads the bilayer; sequence FRFLHETGGAMVYGLIMGLIL. At 67–126 the chain is on the lumenal side; it reads RYATAPTDIDSGTVYNCGKLLFSPSTLLVNITDQVYEYKYQREINQHNISPHQGNAILEK. Residues 127–147 form a helical membrane-spanning segment; the sequence is MTFDPEIFFNVLLPPIIFHAG. Topologically, residues 148–164 are cytoplasmic; sequence YSLKKRHFFQNLGSILT. A helical membrane pass occupies residues 165–185; the sequence is YAFLGTAISCVVIGLIMYGFV. At 186 to 203 the chain is on the lumenal side; sequence KAMVHAGQLKSGDFHFTD. The helical transmembrane segment at 204 to 224 threads the bilayer; it reads CLFFGSLMSATDPVTVLAIFH. Over 225 to 235 the chain is Cytoplasmic; it reads ELHVDPDLYTL. The helical transmembrane segment at 236–256 threads the bilayer; that stretch reads LFGESVLNDAVAIVLTYSISI. Over 257-277 the chain is Lumenal; the sequence is YSPKENPNAFDTAAFFQSVGN. The chain crosses the membrane as a helical span at residues 278–298; it reads FLGIFAGSFAMGSAYAVVTAL. Residues 299 to 309 lie on the Cytoplasmic side of the membrane; sequence LTKFTKLREFP. A helical transmembrane segment spans residues 310–327; it reads MLETGLFFLLSWSAFLSA. Over 328 to 333 the chain is Lumenal; sequence EAAGLT. Residues 334 to 350 traverse the membrane as a helical segment; that stretch reads GIVAVLFCGVTQAHYTY. Residues 351–364 are Cytoplasmic-facing; the sequence is NNLSSDSKLRTKQL. A helical membrane pass occupies residues 365–385; sequence FEFMNFLAENVIFCYMGLALF. Position 386 (threonine 386) is a topological domain, lumenal. A helical membrane pass occupies residues 387-407; sequence FQNHIFNALFILGAFLAIFVA. Residues 408–429 are Cytoplasmic-facing; the sequence is RACNIYPLSFLLNLGRKQKIPW. A helical membrane pass occupies residues 430–450; the sequence is NFQHMMMFSGLRGAIAFALAI. At 451–465 the chain is on the lumenal side; it reads RNTESQPKQMMFTTT. A helical membrane pass occupies residues 466–486; that stretch reads LLLVFFTVWVFGGGTTPMLTW. The Cytoplasmic segment spans residues 487–644; it reads LQIRVGVDLD…EQTRGQPQMD (158 aa).

This sequence belongs to the monovalent cation:proton antiporter 1 (CPA1) transporter (TC 2.A.36) family. Homodimer; phosphatidylinositol-4,5-bisphosphate (PIP2) and phosphatidylinositol 3,4,5-trisphosphate (PIP3) could be involved in the dimer stabilization. Interacts (via the C-terminus) with RACK1. Interacts with CHP1. As to expression, expressed in hair bundles and in vestibular hair bundles. Expressed in brain.

It is found in the late endosome membrane. The protein resides in the early endosome membrane. It localises to the recycling endosome membrane. The protein localises to the cell membrane. Its subcellular location is the cytoplasmic vesicle. It is found in the phagosome membrane. It catalyses the reaction Na(+)(in) + H(+)(out) = Na(+)(out) + H(+)(in). The catalysed reaction is K(+)(in) + H(+)(out) = K(+)(out) + H(+)(in). Endosomal Na(+), K(+)/H(+) antiporter. Mediates the electroneutral exchange of endosomal luminal H(+) for a cytosolic Na(+) or K(+). By facilitating proton efflux, SLC9A9 counteracts the acidity generated by vacuolar (V)-ATPase, thereby limiting luminal acidification. Regulates organellar pH and consequently, endosome maturation and endocytic trafficking of plasma membrane receptors and neurotransporters. Promotes the recycling of transferrin receptors back to the cell surface to facilitate additional iron uptake in the brain. Regulates synaptic transmission by regulating the luminal pH of axonal endosomes. Regulates phagosome lumenal pH, thus affecting phagosome maturation, and consequently, microbicidal activity in macrophages. Can also be active at the cell surface of specialized cells, e.g., in the inner ear hair bundles uses the high K(+) of the endolymph to regulate intracelular pH. In Rattus norvegicus (Rat), this protein is Sodium/hydrogen exchanger 9 (Slc9a9).